Reading from the N-terminus, the 64-residue chain is Large ribosomal subunit protein bL32 (64 aa).

Positions 1–23 are disordered; it reads MAVQKSRVTPSRRGQRRSHDALA.

This sequence belongs to the bacterial ribosomal protein bL32 family.

This Xylella fastidiosa (strain M23) protein is Large ribosomal subunit protein bL32.